The chain runs to 247 residues: Exosome complex component Rrp4 (247 aa).

The S1 motif domain occupies 75-148 (DDLVIGIVEN…RDPVITVKGK (74 aa)). One can recognise a KH domain in the interval 154-220 (TEGVVVDVKP…QAIKLIELKA (67 aa)).

It belongs to the RRP4 family. In terms of assembly, component of the archaeal exosome complex. Forms a trimer of Rrp4 and/or Csl4 subunits. The trimer associates with a hexameric ring-like arrangement composed of 3 Rrp41-Rrp42 heterodimers.

The protein localises to the cytoplasm. In terms of biological role, non-catalytic component of the exosome, which is a complex involved in RNA degradation. Increases the RNA binding and the efficiency of RNA degradation. Confers strong poly(A) specificity to the exosome. The protein is Exosome complex component Rrp4 of Thermosphaera aggregans (strain DSM 11486 / M11TL).